Consider the following 204-residue polypeptide: Tat proofreading chaperone DmsD (204 aa).

This sequence belongs to the TorD/DmsD family. DmsD subfamily.

Required for biogenesis/assembly of DMSO reductase, but not for the interaction of the DmsA signal peptide with the Tat system. May be part of a chaperone cascade complex that facilitates a folding-maturation pathway for the substrate protein. The polypeptide is Tat proofreading chaperone DmsD (Escherichia coli O6:H1 (strain CFT073 / ATCC 700928 / UPEC)).